Here is a 274-residue protein sequence, read N- to C-terminus: Protein FRG1 homolog (274 aa).

Positions 20 to 36 (KKNLFKVGKEKKKKNKD) match the Nuclear localization signal motif. The disordered stretch occupies residues 27–46 (GKEKKKKNKDDKEKIDPDTV). A compositionally biased stretch (basic and acidic residues) spans 34–43 (NKDDKEKIDP). The Bipartite nuclear localization signal motif lies at 252–268 (QADGSAHELLLDRRMKM).

This sequence belongs to the FRG1 family.

The protein resides in the nucleus. The protein localises to the cajal body. Its subcellular location is the nucleolus. It is found in the cytoplasm. In terms of biological role, binds to mRNA in a sequence-independent manner. May play a role in regulation of pre-mRNA splicing or in the assembly of rRNA into ribosomal subunits. May be involved in mRNA transport. May be involved in epigenetic regulation of muscle differentiation through regulation of activity of the histone-lysine N-methyltransferase KMT5B. The protein is Protein FRG1 homolog (frg-1) of Caenorhabditis elegans.